The sequence spans 535 residues: CTP synthase (535 aa).

The interval 1 to 267 (MTKYIFVTGG…DQIVCDHLKL (267 aa)) is amidoligase domain. S13 lines the CTP pocket. S13 lines the UTP pocket. 14–19 (SLGKGI) serves as a coordination point for ATP. Y54 serves as a coordination point for L-glutamine. D71 is an ATP binding site. Positions 71 and 141 each coordinate Mg(2+). CTP is bound by residues 148-150 (DIE), 188-193 (KTKPTQ), and K224. UTP is bound by residues 188-193 (KTKPTQ) and K224. ATP is bound at residue 240–242 (RDA). A Glutamine amidotransferase type-1 domain is found at 292-534 (KIALVGKYVE…VRASITNKES (243 aa)). G354 lines the L-glutamine pocket. The active-site Nucleophile; for glutamine hydrolysis is the C381. Residues 382–385 (LGMQ), E405, and R462 contribute to the L-glutamine site. Residues H507 and E509 contribute to the active site.

This sequence belongs to the CTP synthase family. As to quaternary structure, homotetramer.

It catalyses the reaction UTP + L-glutamine + ATP + H2O = CTP + L-glutamate + ADP + phosphate + 2 H(+). The enzyme catalyses L-glutamine + H2O = L-glutamate + NH4(+). It carries out the reaction UTP + NH4(+) + ATP = CTP + ADP + phosphate + 2 H(+). Its pathway is pyrimidine metabolism; CTP biosynthesis via de novo pathway; CTP from UDP: step 2/2. Allosterically activated by GTP, when glutamine is the substrate; GTP has no effect on the reaction when ammonia is the substrate. The allosteric effector GTP functions by stabilizing the protein conformation that binds the tetrahedral intermediate(s) formed during glutamine hydrolysis. Inhibited by the product CTP, via allosteric rather than competitive inhibition. Functionally, catalyzes the ATP-dependent amination of UTP to CTP with either L-glutamine or ammonia as the source of nitrogen. Regulates intracellular CTP levels through interactions with the four ribonucleotide triphosphates. In Bacillus cereus (strain ATCC 14579 / DSM 31 / CCUG 7414 / JCM 2152 / NBRC 15305 / NCIMB 9373 / NCTC 2599 / NRRL B-3711), this protein is CTP synthase.